Consider the following 174-residue polypeptide: Repair DNA polymerase X (174 aa).

The interval 42–51 is involved in ssDNA binding; that stretch reads REEKMLNDVD. Mg(2+) is bound by residues Asp49 and Asp51. Cys81 and Cys86 are disulfide-bonded. Asp100 is a binding site for Mg(2+).

The protein belongs to the DNA polymerase type-X family. Requires Mg(2+) as cofactor.

The protein resides in the virion. The enzyme catalyses DNA(n) + a 2'-deoxyribonucleoside 5'-triphosphate = DNA(n+1) + diphosphate. Its function is as follows. Error-prone polymerase lacking a proofreading 3'-5' exonuclease which catalyzes the gap-filling reaction during the DNA repair process. Specifically binds intermediates in the single-nucleotide base-excision repair process. Also catalyzes DNA polymerization with low nucleotide-insertion fidelity. Probably acts as a strategic DNA mutase, which gives rise to a rapid emergence of variants. Generates mismatched G-G pairs, in that case, the polymerase first binds the deoxynucleotide followed by mismatch formation. Together with the viral DNA ligase, fills the single nucleotide gaps generated by the AP endonuclease. Binds DNA with high affinity via the helix alphaE. This Ornithodoros (relapsing fever ticks) protein is Repair DNA polymerase X.